Reading from the N-terminus, the 568-residue chain is Urease subunit alpha (568 aa).

Positions 130-568 (GGIDTHIHFI…LPMAQRYFLF (439 aa)) constitute a Urease domain. Ni(2+)-binding residues include histidine 135, histidine 137, and lysine 218. Position 218 is an N6-carboxylysine (lysine 218). Histidine 220 serves as a coordination point for substrate. Ni(2+) contacts are provided by histidine 247 and histidine 273. Catalysis depends on histidine 321, which acts as the Proton donor. A Ni(2+)-binding site is contributed by aspartate 361.

Belongs to the metallo-dependent hydrolases superfamily. Urease alpha subunit family. As to quaternary structure, heterotrimer of UreA (gamma), UreB (beta) and UreC (alpha) subunits. Three heterotrimers associate to form the active enzyme. Ni cation is required as a cofactor. Carboxylation allows a single lysine to coordinate two nickel ions.

It is found in the cytoplasm. It carries out the reaction urea + 2 H2O + H(+) = hydrogencarbonate + 2 NH4(+). The protein operates within nitrogen metabolism; urea degradation; CO(2) and NH(3) from urea (urease route): step 1/1. This Burkholderia mallei (strain NCTC 10247) protein is Urease subunit alpha.